A 361-amino-acid polypeptide reads, in one-letter code: DNA replication and repair protein RecF (361 aa).

An ATP-binding site is contributed by 30–37 (GANGSGKT).

This sequence belongs to the RecF family.

The protein resides in the cytoplasm. Its function is as follows. The RecF protein is involved in DNA metabolism; it is required for DNA replication and normal SOS inducibility. RecF binds preferentially to single-stranded, linear DNA. It also seems to bind ATP. In Pectobacterium atrosepticum (strain SCRI 1043 / ATCC BAA-672) (Erwinia carotovora subsp. atroseptica), this protein is DNA replication and repair protein RecF.